We begin with the raw amino-acid sequence, 146 residues long: Snaclec anticoagulant protein subunit B (146 aa).

An N-terminal signal peptide occupies residues 1–23 (MGRFIFVSFGLLVLFLSLSGTAA). The 123-residue stretch at 24–146 (DCPSDWSSYE…IANFVCEFQA (123 aa)) folds into the C-type lectin domain. Disulfide bonds link Cys25–Cys36, Cys53–Cys142, and Cys119–Cys134. Residues Ser64, Gln66, and Glu70 each coordinate Ca(2+). Glu143 serves as a coordination point for Ca(2+).

It belongs to the snaclec family. Heterodimer with subunit A of agkisacutacin or AaACP; disulfide-linked. As to expression, expressed by the venom gland.

The protein resides in the secreted. Anticoagulant protein which binds to the gamma-carboxyglutamic acid-domain regions of factors IX and factor X in the presence of calcium with a 1 to 1 stoichiometry. Also inhibits platelet aggregation by binding to platelet glycoprotein Ibalpha (GP1BA) and functioning as a blocker of vWF. Is devoid of hemorrhagic and lethal activities. Possesses antithrombotic and thrombolytic activities. Also hydrolyzes the Aalpha-chain of fibrinogen. Does not affect the Bbeta-chain and the gamma chain. The sequence is that of Snaclec anticoagulant protein subunit B from Deinagkistrodon acutus (Hundred-pace snake).